The following is a 148-amino-acid chain: Single-stranded DNA-binding protein, mitochondrial (148 aa).

The N-terminal 16 residues, 1–16 (MFRRPVVQVLRQFVRH), are a transit peptide targeting the mitochondrion. In terms of domain architecture, SSB spans 30–141 (LNRVQLLGRV…IIADNIIFLS (112 aa)). Phosphoserine occurs at positions 67 and 79. Residue lysine 113 is modified to N6-acetyllysine. Position 122 is an N6-succinyllysine (lysine 122).

As to quaternary structure, homotetramer. Interacts with MPG/AAG, through inhibition of its glycosylase activity it potentially prevents formation of DNA breaks in ssDNA, ensuring that base removal primarily occurs in dsDNA. Interacts with POLDIP2. Interacts with PRIMPOL.

The protein localises to the mitochondrion. The protein resides in the mitochondrion matrix. It localises to the mitochondrion nucleoid. In terms of biological role, binds preferentially and cooperatively to pyrimidine rich single-stranded DNA (ss-DNA). In vitro, required to maintain the copy number of mitochondrial DNA (mtDNA) and plays a crucial role during mtDNA replication by stimulating the activity of the replisome components POLG and TWNK at the replication fork. Promotes the activity of the gamma complex polymerase POLG, largely by organizing the template DNA and eliminating secondary structures to favor ss-DNA conformations that facilitate POLG activity. In addition it is able to promote the 5'-3' unwinding activity of the mtDNA helicase TWNK. May also function in mtDNA repair. In Bos taurus (Bovine), this protein is Single-stranded DNA-binding protein, mitochondrial (SSBP1).